The sequence spans 186 residues: Peptidyl-tRNA hydrolase (186 aa).

Tyr14 contacts tRNA. The active-site Proton acceptor is His19. TRNA is bound by residues Tyr61, Asn63, and Asn107.

This sequence belongs to the PTH family. Monomer.

It localises to the cytoplasm. It catalyses the reaction an N-acyl-L-alpha-aminoacyl-tRNA + H2O = an N-acyl-L-amino acid + a tRNA + H(+). Functionally, hydrolyzes ribosome-free peptidyl-tRNAs (with 1 or more amino acids incorporated), which drop off the ribosome during protein synthesis, or as a result of ribosome stalling. Catalyzes the release of premature peptidyl moieties from peptidyl-tRNA molecules trapped in stalled 50S ribosomal subunits, and thus maintains levels of free tRNAs and 50S ribosomes. This is Peptidyl-tRNA hydrolase from Helicobacter pylori (strain P12).